A 62-amino-acid polypeptide reads, in one-letter code: Large ribosomal subunit protein uL30 (62 aa).

This sequence belongs to the universal ribosomal protein uL30 family. As to quaternary structure, part of the 50S ribosomal subunit.

This Thioalkalivibrio sulfidiphilus (strain HL-EbGR7) protein is Large ribosomal subunit protein uL30.